Here is a 459-residue protein sequence, read N- to C-terminus: Transcription factor 7-like 2 (459 aa).

Gly residues predominate over residues 1–11 (MPQLNGGGGDD). The tract at residues 1-53 (MPQLNGGGGDDLGANDELISFKDEGEQEEKNSENSSAERDLADVKSSLVNESE) is CTNNB1-binding. The segment at 1–96 (MPQLNGGGGD…AKRQDGGLFK (96 aa)) is disordered. Basic and acidic residues predominate over residues 19 to 43 (ISFKDEGEQEEKNSENSSAERDLAD). Lys22 participates in a covalent cross-link: Glycyl lysine isopeptide (Lys-Gly) (interchain with G-Cter in SUMO2). Polar residues predominate over residues 47–56 (SLVNESETNQ). Residues 63 to 91 (EAERRPPPRSESFRDKSRESLEEAAKRQD) are compositionally biased toward basic and acidic residues. Phosphothreonine; by NLK is present on residues Thr178 and Thr189. A mediates interaction with MAD2L2 region spans residues 178–372 (TPLITYSNEH…RRWHALSREE (195 aa)). A compositionally biased stretch (polar residues) spans 295-305 (TVKQESSQSDV). 2 disordered regions span residues 295-327 (TVKQ…KPHI) and 397-418 (RDNY…TNEH). Lys297 participates in a covalent cross-link: Glycyl lysine isopeptide (Lys-Gly) (interchain with G-Cter in SUMO). A compositionally biased stretch (basic and acidic residues) spans 312 to 323 (KHQDSKKEEEKK). A DNA-binding region (HMG box) is located at residues 327-395 (IKKPLNAFML…LHMQLYPGWS (69 aa)). A Nuclear localization signal motif is present at residues 402 to 408 (KKKKRKR).

Belongs to the TCF/LEF family. In terms of assembly, interacts with TGFB1I1. Interacts with SPIN1. Interacts with CTNNB1 (via the armadillo repeat); forms stable transcription complex. Interacts with EP300. Interacts with NLK. Interacts with CCDC85B (probably through the HMG box); prevents interaction with CTNNB1. Interacts with TNIK. Interacts with MAD2L2; prevents TCF7L2/TCF4 binding to promZIPK/DAPK3oters, negatively modulating its transcriptional activity. Interacts with ZIPK/DAPK3. Interacts with XIAP/BIRC4 and TLE3. Interacts with DDIT3/CHOP. The CTNNB1 and TCF7L2/TCF4 complex interacts with PML (isoform PML-4). Identified in a complex with CTNNB1 and FERMT2. Interacts with C11orf84/SPINDOC in a SPIN1-dependent manner. Interacts with DAZAP2; the interaction results in localization of DAZAP2 to the nucleus. Phosphorylated at Thr-178 and/or Thr-189 by NLK. Phosphorylation by NLK at these sites inhibits DNA-binding by TCF7L2/TCF4, thereby preventing transcriptional activation of target genes of the canonical Wnt/beta-catenin signaling pathway. Post-translationally, polysumoylated. Sumoylation is enhanced by PIAS family members and desumoylation is enhanced by SENP2. Sumoylation/desumoylation regulates TCF7L2/TCF4 transcription activity in the Wnt/beta-catenin signaling pathway without altering interaction with CTNNB1 nor binding to DNA. Detected in adult brain and liver, and at lower levels in intestine, with a clear increase from the distal colon to the duodenum. Detected at low levels in heart, lung, kidney, pituitary and testis.

It is found in the nucleus. The protein localises to the PML body. In terms of biological role, participates in the Wnt signaling pathway and modulates MYC expression by binding to its promoter in a sequence-specific manner. Acts as a repressor in the absence of CTNNB1, and as activator in its presence. Activates transcription from promoters with several copies of the Tcf motif CCTTTGATC in the presence of CTNNB1. TLE1, TLE2, TLE3 and TLE4 repress transactivation mediated by TCF7L2/TCF4 and CTNNB1. Expression of dominant-negative mutants results in cell-cycle arrest in G1. Necessary for the maintenance of the epithelial stem-cell compartment of the small intestine. The polypeptide is Transcription factor 7-like 2 (Tcf7l2) (Mus musculus (Mouse)).